A 248-amino-acid polypeptide reads, in one-letter code: uncharacterized protein (248 aa).

The protein to M.jannaschii MJ1452.

This is an uncharacterized protein from Methanothermobacter thermautotrophicus (strain ATCC 29096 / DSM 1053 / JCM 10044 / NBRC 100330 / Delta H) (Methanobacterium thermoautotrophicum).